The chain runs to 99 residues: Small ribosomal subunit protein bS6c (99 aa).

The protein belongs to the bacterial ribosomal protein bS6 family.

The protein resides in the plastid. The protein localises to the chloroplast. Functionally, binds together with bS18 to 16S ribosomal RNA. This chain is Small ribosomal subunit protein bS6c, found in Cyanidioschyzon merolae (strain NIES-3377 / 10D) (Unicellular red alga).